A 149-amino-acid polypeptide reads, in one-letter code: Putative pre-16S rRNA nuclease (149 aa).

It belongs to the YqgF nuclease family.

The protein resides in the cytoplasm. Could be a nuclease involved in processing of the 5'-end of pre-16S rRNA. The chain is Putative pre-16S rRNA nuclease from Pseudoalteromonas translucida (strain TAC 125).